Here is a 309-residue protein sequence, read N- to C-terminus: Ornithine carbamoyltransferase (309 aa).

Carbamoyl phosphate contacts are provided by residues 56–59 (STRT), Gln-83, Arg-107, and 134–137 (HPCQ). Residues Asn-165, Asp-223, and 227 to 228 (SM) contribute to the L-ornithine site. Carbamoyl phosphate is bound by residues 263–264 (CL) and Arg-291.

It belongs to the aspartate/ornithine carbamoyltransferase superfamily. OTCase family.

The protein localises to the cytoplasm. The catalysed reaction is carbamoyl phosphate + L-ornithine = L-citrulline + phosphate + H(+). Its pathway is amino-acid biosynthesis; L-arginine biosynthesis; L-arginine from L-ornithine and carbamoyl phosphate: step 1/3. In terms of biological role, reversibly catalyzes the transfer of the carbamoyl group from carbamoyl phosphate (CP) to the N(epsilon) atom of ornithine (ORN) to produce L-citrulline. This Burkholderia lata (strain ATCC 17760 / DSM 23089 / LMG 22485 / NCIMB 9086 / R18194 / 383) protein is Ornithine carbamoyltransferase.